We begin with the raw amino-acid sequence, 140 residues long: Ribonucleases P/MRP protein subunit POP7 (140 aa).

Positions 1–21 (MALKKNTHNKSTKRVTKHPSL) are disordered. Phosphoserine is present on Ser115.

The protein belongs to the histone-like Alba family. In terms of assembly, component of nuclear RNase P and RNase MRP complexes. RNase P consists of an RNA moiety and at least 9 protein subunits including POP1, POP3, POP4, POP5, POP6, POP7, POP8, RPP1 and RPR2. RNase MRP complex consists of an RNA moiety and at least 10 protein subunits including POP1, POP3, POP4, POP5, POP6, POP7, POP8, RMP1, RPP1 and SNM1, many of which are shared with the RNase P complex.

It is found in the nucleus. The catalysed reaction is Endonucleolytic cleavage of RNA, removing 5'-extranucleotides from tRNA precursor.. Component of ribonuclease P, a protein complex that generates mature tRNA molecules by cleaving their 5'-ends. Also a component of RNase MRP, which cleaves pre-rRNA sequences. In Saccharomyces cerevisiae (strain ATCC 204508 / S288c) (Baker's yeast), this protein is Ribonucleases P/MRP protein subunit POP7 (POP7).